Reading from the N-terminus, the 303-residue chain is Aspartate carbamoyltransferase catalytic subunit (303 aa).

Positions 54 and 55 each coordinate carbamoyl phosphate. Lys-82 is a binding site for L-aspartate. Carbamoyl phosphate is bound by residues Arg-104, His-132, and Gln-135. Arg-165 and Arg-221 together coordinate L-aspartate. Residues Gly-261 and Pro-262 each contribute to the carbamoyl phosphate site.

The protein belongs to the aspartate/ornithine carbamoyltransferase superfamily. ATCase family. Heterododecamer (2C3:3R2) of six catalytic PyrB chains organized as two trimers (C3), and six regulatory PyrI chains organized as three dimers (R2).

It catalyses the reaction carbamoyl phosphate + L-aspartate = N-carbamoyl-L-aspartate + phosphate + H(+). Its pathway is pyrimidine metabolism; UMP biosynthesis via de novo pathway; (S)-dihydroorotate from bicarbonate: step 2/3. Catalyzes the condensation of carbamoyl phosphate and aspartate to form carbamoyl aspartate and inorganic phosphate, the committed step in the de novo pyrimidine nucleotide biosynthesis pathway. The polypeptide is Aspartate carbamoyltransferase catalytic subunit (Koribacter versatilis (strain Ellin345)).